Reading from the N-terminus, the 340-residue chain is Sesquiterpene synthase 6 (340 aa).

Mg(2+)-binding residues include Asp-90, Asn-229, Ser-233, and Glu-237. The short motif at 90-94 (DDITD) is the DDXXD motif element. An NSE/DTE motif motif is present at residues 229 to 237 (NDIYSFNNE). 2 residues coordinate (2E,6E)-farnesyl diphosphate: Arg-316 and Tyr-317.

Belongs to the terpene synthase family. It depends on Mg(2+) as a cofactor.

The enzyme catalyses (2E,6E)-farnesyl diphosphate = delta-cadinene + diphosphate. It carries out the reaction (2E,6E)-farnesyl diphosphate = bicyclogermacrene + diphosphate. Its function is as follows. Terpene cyclase that catalyzes the cyclization of farnesyl diphosphate (FPP) to various sesquiterpenes, including bicycloelemene, alpha-gurjunene, 9-epi-caryophylene, bicyclosesquiphellandrene, bicyclogermacrene and delta-cadinene. This is Sesquiterpene synthase 6 from Postia placenta (strain ATCC 44394 / Madison 698-R) (Brown rot fungus).